The chain runs to 209 residues: Pyridoxine/pyridoxamine 5'-phosphate oxidase (209 aa).

Residues 2–5 (RVEY) and Lys-66 contribute to the substrate site. Residues 61–66 (RTVLCK), 76–77 (FT), Lys-83, and Gln-105 contribute to the FMN site. Substrate contacts are provided by Tyr-123, Arg-127, and Ser-131. Residues 140–141 (QS) and Trp-186 contribute to the FMN site. 192–194 (RVH) lines the substrate pocket. Position 196 (Arg-196) interacts with FMN.

It belongs to the pyridoxamine 5'-phosphate oxidase family. As to quaternary structure, homodimer. The cofactor is FMN.

The catalysed reaction is pyridoxamine 5'-phosphate + O2 + H2O = pyridoxal 5'-phosphate + H2O2 + NH4(+). It carries out the reaction pyridoxine 5'-phosphate + O2 = pyridoxal 5'-phosphate + H2O2. Its pathway is cofactor metabolism; pyridoxal 5'-phosphate salvage; pyridoxal 5'-phosphate from pyridoxamine 5'-phosphate: step 1/1. The protein operates within cofactor metabolism; pyridoxal 5'-phosphate salvage; pyridoxal 5'-phosphate from pyridoxine 5'-phosphate: step 1/1. Catalyzes the oxidation of either pyridoxine 5'-phosphate (PNP) or pyridoxamine 5'-phosphate (PMP) into pyridoxal 5'-phosphate (PLP). The sequence is that of Pyridoxine/pyridoxamine 5'-phosphate oxidase from Mycobacterium sp. (strain JLS).